We begin with the raw amino-acid sequence, 92 residues long: Signal recognition particle 19 kDa protein (92 aa).

It belongs to the SRP19 family. Part of the signal recognition particle protein translocation system, which is composed of SRP and FtsY. Archaeal SRP consists of a 7S RNA molecule of 300 nucleotides and two protein subunits: SRP54 and SRP19.

Its subcellular location is the cytoplasm. In terms of biological role, involved in targeting and insertion of nascent membrane proteins into the cytoplasmic membrane. Binds directly to 7S RNA and mediates binding of the 54 kDa subunit of the SRP. The protein is Signal recognition particle 19 kDa protein of Haloarcula marismortui (strain ATCC 43049 / DSM 3752 / JCM 8966 / VKM B-1809) (Halobacterium marismortui).